The following is a 276-amino-acid chain: ATP synthase subunit delta (276 aa).

It belongs to the ATPase delta chain family. In terms of assembly, F-type ATPases have 2 components, F(1) - the catalytic core - and F(0) - the membrane proton channel. F(1) has five subunits: alpha(3), beta(3), gamma(1), delta(1), epsilon(1). F(0) has three main subunits: a(1), b(2) and c(10-14). The alpha and beta chains form an alternating ring which encloses part of the gamma chain. F(1) is attached to F(0) by a central stalk formed by the gamma and epsilon chains, while a peripheral stalk is formed by the delta and b chains.

The protein resides in the cell membrane. Its function is as follows. F(1)F(0) ATP synthase produces ATP from ADP in the presence of a proton or sodium gradient. F-type ATPases consist of two structural domains, F(1) containing the extramembraneous catalytic core and F(0) containing the membrane proton channel, linked together by a central stalk and a peripheral stalk. During catalysis, ATP synthesis in the catalytic domain of F(1) is coupled via a rotary mechanism of the central stalk subunits to proton translocation. In terms of biological role, this protein is part of the stalk that links CF(0) to CF(1). It either transmits conformational changes from CF(0) to CF(1) or is implicated in proton conduction. The sequence is that of ATP synthase subunit delta from Kineococcus radiotolerans (strain ATCC BAA-149 / DSM 14245 / SRS30216).